Reading from the N-terminus, the 250-residue chain is Urease accessory protein UreF (250 aa).

Positions methionine 1–alanine 21 are disordered. The span at alanine 9–alanine 21 shows a compositional bias: low complexity.

It belongs to the UreF family. UreD, UreF and UreG form a complex that acts as a GTP-hydrolysis-dependent molecular chaperone, activating the urease apoprotein by helping to assemble the nickel containing metallocenter of UreC. The UreE protein probably delivers the nickel.

The protein resides in the cytoplasm. Its function is as follows. Required for maturation of urease via the functional incorporation of the urease nickel metallocenter. This Methylobacterium sp. (strain 4-46) protein is Urease accessory protein UreF.